The chain runs to 141 residues: Hemoglobin subunit alpha (141 aa).

Residues 1–141 (VLSAADKTNV…VSTVLTSKYR (141 aa)) enclose the Globin domain. A Phosphoserine modification is found at Ser-3. Residue Lys-7 is modified to N6-succinyllysine. Phosphothreonine is present on Thr-8. At Lys-11 the chain carries N6-succinyllysine. Lys-16 is modified (N6-acetyllysine; alternate). Lys-16 carries the N6-succinyllysine; alternate modification. At Ser-35 the chain carries Phosphoserine. The residue at position 40 (Lys-40) is an N6-succinyllysine. The residue at position 49 (Ser-49) is a Phosphoserine. His-58 is an O2 binding site. A heme b-binding site is contributed by His-87. Residue Ser-102 is modified to Phosphoserine. Thr-108 is modified (phosphothreonine). Residues Ser-124 and Ser-131 each carry the phosphoserine modification. Phosphothreonine is present on residues Thr-134 and Thr-137. Residue Ser-138 is modified to Phosphoserine.

Belongs to the globin family. In terms of assembly, heterotetramer of two alpha chains and two beta chains. As to expression, red blood cells.

In terms of biological role, involved in oxygen transport from the lung to the various peripheral tissues. The polypeptide is Hemoglobin subunit alpha (Sciurus carolinensis (Eastern gray squirrel)).